Here is an 805-residue protein sequence, read N- to C-terminus: H(+)/Cl(-) exchange transporter 7 (805 aa).

A disordered region spans residues 1 to 49 (MANVSKKVSWSGRDRDDEEAAPLLRRTARPGGGTPLLNGAGPGAARQSP). Topologically, residues 1–126 (MANVSKKVSW…TAFRTVEIKR (126 aa)) are cytoplasmic. Phosphoserine occurs at positions 9 and 60. Helical transmembrane passes span 127-159 (WVIC…YRVI) and 174-197 (FSLL…VAFI). Positions 203 to 207 (GSGIP) match the Selectivity filter part_1 motif. Chloride is bound at residue Ser204. The segment at residues 206–213 (IPQIKCFL) is an intramembrane region (helical). Helical transmembrane passes span 223–241 (RLKT…VVGG) and 247–264 (EGPM…ISQG). Residues 245–249 (GKEGP) carry the Selectivity filter part_2 motif. 2 consecutive intramembrane regions (helical) follow at residues 288-300 (FVSA…VSAA) and 304-312 (PVGGVLFSL). 5 helical membrane passes run 322-341 (FLTW…LNFV), 375-405 (IPVF…FRIR), 410-432 (PCLQ…FVLI), 487-507 (PLTL…TYGL), and 512-535 (GVFI…LSYL). The short motif at 512-516 (GVFIP) is the Selectivity filter part_3 element. Phe514 serves as a coordination point for chloride. The helical intramembrane region spans 545 to 559 (GKYALMGAAAQLGGI). An intramembrane region (note=Loop between two helices) is located at residues 560 to 562 (VRM). An intramembrane region (helical) is located at residues 563–574 (TLSLTVIMMEAT). An intramembrane region (note=Loop between two helices) is located at residues 575-578 (SNVT). Residues 579–597 (YGFPIMLVLMTAKIVGDVF) traverse the membrane as a helical segment. Topologically, residues 598 to 805 (IEGLYDMHIQ…GLEELSLAQT (208 aa)) are cytoplasmic. Tyr602 lines the chloride pocket. CBS domains are found at residues 631–695 (MSTP…VFVE) and 741–799 (MNPS…GLEE). ATP is bound by residues 658–660 (HNG) and 783–786 (TRKD). Ser801 bears the Phosphoserine mark.

This sequence belongs to the chloride channel (TC 2.A.49) family. ClC-7/CLCN7 subfamily. In terms of assembly, chloride channel 7 are heteromers of alpha (CLCN7) and beta (OSTM1) subunits. In terms of tissue distribution, brain and kidney.

The protein localises to the lysosome membrane. The catalysed reaction is 2 chloride(in) + H(+)(out) = 2 chloride(out) + H(+)(in). Slowly voltage-gated channel mediating the exchange of chloride ions against protons. Functions as antiporter and contributes to the acidification of the lysosome lumen and may be involved in maintaining lysosomal pH. The CLC channel family contains both chloride channels and proton-coupled anion transporters that exchange chloride or another anion for protons. The presence of conserved gating glutamate residues is typical for family members that function as antiporters. The chain is H(+)/Cl(-) exchange transporter 7 from Homo sapiens (Human).